A 23-amino-acid polypeptide reads, in one-letter code: U1-poneritoxin-Da3b (23 aa).

The protein belongs to the non-disulfide-bridged peptide (NDBP) superfamily. Medium-length antimicrobial peptide (group 3) family. Ponericin-W subfamily. In terms of tissue distribution, expressed by the venom gland.

The protein resides in the secreted. The protein localises to the target cell membrane. In terms of biological role, may have antimicrobial properties, like most ant linear peptides. May act by disrupting the integrity of the bacterial cell membrane. The protein is U1-poneritoxin-Da3b of Dinoponera australis (Giant neotropical hunting ant).